Consider the following 180-residue polypeptide: Inner membrane-spanning protein YciB (180 aa).

Transmembrane regions (helical) follow at residues 11–31 (ILFF…ALII), 52–72 (IIMG…NKVE), 76–96 (WKVT…QYGF), 121–141 (LAWA…SQYC), and 149–169 (FKSF…GIYV).

Belongs to the YciB family.

It is found in the cell inner membrane. Plays a role in cell envelope biogenesis, maintenance of cell envelope integrity and membrane homeostasis. In Mannheimia succiniciproducens (strain KCTC 0769BP / MBEL55E), this protein is Inner membrane-spanning protein YciB.